The primary structure comprises 397 residues: Serine protease MT3772 (397 aa).

A run of 4 helical transmembrane segments spans residues 9–29 (IAVLAVAFIAAISGWRAGALG), 32–52 (LSFGGVLLGATAGVLLAPHIV), 62–82 (LFAALFLILALVVVGEVAGVV), and 102–122 (VIGVGVQLVVVLTAAWLLAMP). A disulfide bridge connects residues Cys214 and Cys395. Residue His235 is the Proton acceptor of the active site. Asp264 is a catalytic residue. The active-site Charge relay system is the Ser343.

Belongs to the peptidase S1C family. Monomer.

The protein localises to the membrane. In terms of biological role, required for M.tuberculosis resistance to oxidative stress in addition to its role in resistance to acid, which is essential for virulence. In Mycobacterium tuberculosis (strain CDC 1551 / Oshkosh), this protein is Serine protease MT3772.